The primary structure comprises 1409 residues: Inositol hexakisphosphate and diphosphoinositol-pentakisphosphate kinase 1 (1409 aa).

Substrate is bound at residue 64 to 65 (KK). ATP contacts are provided by residues Arg145, Lys198, His205, Arg224, 248 to 251 (EEFM), and 257 to 259 (DVK). Residue 224 to 225 (RK) coordinates substrate. Lys259 and Arg273 together coordinate substrate. Residues Ser275, Asp320, and 332 to 334 (DVN) contribute to the ATP site. Position 337–340 (337–340 (SFVK)) interacts with substrate. The segment at 382–453 (PTTSGTMMEL…VLDITRLLLA (72 aa)) is polyphosphoinositide-binding domain. The interval 891 to 996 (GVEEEGSAPA…PTEMKQSGLG (106 aa)) is disordered. Ser920 and Ser963 each carry phosphoserine. Positions 981–996 (FSSSRPPTEMKQSGLG) are enriched in polar residues. 2 positions are modified to phosphoserine: Ser1013 and Ser1049. Over residues 1110–1119 (MHSSQASDNP) the composition is skewed to polar residues. The segment at 1110–1183 (MHSSQASDNP…PSLNSHVAEE (74 aa)) is disordered. Phosphoserine is present on residues Ser1121 and Ser1128. The span at 1144–1162 (SSGPSSTVSSAGPSSPTTV) shows a compositional bias: low complexity. A compositionally biased stretch (polar residues) spans 1163–1178 (DGNSQFGFSDQPSLNS).

It belongs to the histidine acid phosphatase family. VIP1 subfamily.

The protein resides in the cytoplasm. Its subcellular location is the cytosol. It is found in the cell membrane. It catalyses the reaction 1D-myo-inositol hexakisphosphate + ATP = 1-diphospho-1D-myo-inositol 2,3,4,5,6-pentakisphosphate + ADP. The catalysed reaction is 5-diphospho-1D-myo-inositol 1,2,3,4,6-pentakisphosphate + ATP + H(+) = 1,5-bis(diphospho)-1D-myo-inositol 2,3,4,6-tetrakisphosphate + ADP. Functionally, bifunctional inositol kinase that acts in concert with the IP6K kinases IP6K1, IP6K2 and IP6K3 to synthesize the diphosphate group-containing inositol pyrophosphates diphosphoinositol pentakisphosphate, PP-InsP5, and bis-diphosphoinositol tetrakisphosphate, (PP)2-InsP4. PP-InsP5 and (PP)2-InsP4, also respectively called InsP7 and InsP8, regulate a variety of cellular processes, including apoptosis, vesicle trafficking, cytoskeletal dynamics, exocytosis, insulin signaling and neutrophil activation. Phosphorylates inositol hexakisphosphate (InsP6) at position 1 to produce PP-InsP5 which is in turn phosphorylated by IP6Ks to produce (PP)2-InsP4. Alternatively, phosphorylates PP-InsP5 at position 1, produced by IP6Ks from InsP6, to produce (PP)2-InsP4. Activated when cells are exposed to hyperosmotic stress. The chain is Inositol hexakisphosphate and diphosphoinositol-pentakisphosphate kinase 1 from Pongo abelii (Sumatran orangutan).